Reading from the N-terminus, the 313-residue chain is Methionyl-tRNA formyltransferase (313 aa).

113-116 (SLLP) is a binding site for (6S)-5,6,7,8-tetrahydrofolate.

This sequence belongs to the Fmt family.

The catalysed reaction is L-methionyl-tRNA(fMet) + (6R)-10-formyltetrahydrofolate = N-formyl-L-methionyl-tRNA(fMet) + (6S)-5,6,7,8-tetrahydrofolate + H(+). Attaches a formyl group to the free amino group of methionyl-tRNA(fMet). The formyl group appears to play a dual role in the initiator identity of N-formylmethionyl-tRNA by promoting its recognition by IF2 and preventing the misappropriation of this tRNA by the elongation apparatus. This is Methionyl-tRNA formyltransferase from Francisella tularensis subsp. mediasiatica (strain FSC147).